A 310-amino-acid polypeptide reads, in one-letter code: Homoserine kinase (310 aa).

ATP is bound at residue 85–95 (PKGLGLGSSGA).

It belongs to the GHMP kinase family. Homoserine kinase subfamily.

The protein localises to the cytoplasm. The catalysed reaction is L-homoserine + ATP = O-phospho-L-homoserine + ADP + H(+). The protein operates within amino-acid biosynthesis; L-threonine biosynthesis; L-threonine from L-aspartate: step 4/5. Catalyzes the ATP-dependent phosphorylation of L-homoserine to L-homoserine phosphate. The sequence is that of Homoserine kinase from Thermoplasma acidophilum (strain ATCC 25905 / DSM 1728 / JCM 9062 / NBRC 15155 / AMRC-C165).